A 262-amino-acid chain; its full sequence is Ribosome-recycling factor, mitochondrial (262 aa).

A mitochondrion-targeting transit peptide spans 1-55; it reads MASGIRCFRLLHPAFRSYHAALTRPVSEVSMKTVSGRQHGHRQYSAYPAVPVRHF.

This sequence belongs to the RRF family.

It localises to the mitochondrion. Its function is as follows. Responsible for the disassembly of ribosomes from messenger RNA at the termination of mitochondrial protein biosynthesis. Acts in collaboration with GFM2. Promotes mitochondrial ribosome recycling by dissolution of intersubunit contacts. This is Ribosome-recycling factor, mitochondrial (Mrrf) from Mus musculus (Mouse).